The sequence spans 212 residues: Probable nicotinate-nucleotide adenylyltransferase (212 aa).

It belongs to the NadD family.

The catalysed reaction is nicotinate beta-D-ribonucleotide + ATP + H(+) = deamido-NAD(+) + diphosphate. The protein operates within cofactor biosynthesis; NAD(+) biosynthesis; deamido-NAD(+) from nicotinate D-ribonucleotide: step 1/1. Its function is as follows. Catalyzes the reversible adenylation of nicotinate mononucleotide (NaMN) to nicotinic acid adenine dinucleotide (NaAD). In Shewanella sp. (strain MR-7), this protein is Probable nicotinate-nucleotide adenylyltransferase.